Reading from the N-terminus, the 719-residue chain is Ferric reductase transmembrane component 4 (719 aa).

The first 18 residues, 1–18 (MLLVHIISFLLFFQLSAA), serve as a signal peptide directing secretion. The Extracellular segment spans residues 19-156 (KAPPSKTSLI…YGYYYNHDIP (138 aa)). 6 N-linked (GlcNAc...) asparagine glycosylation sites follow: Asn-51, Asn-80, Asn-101, Asn-113, Asn-127, and Asn-135. The helical transmembrane segment at 157-177 (YYFGGIICAYFVGVMLLAGLI) threads the bilayer. The Cytoplasmic segment spans residues 178–228 (RFLNYTPIKKIMFQQKLVNYVRGYTTLPTLYEKHAEPFSYLKVITGYLPTR). Residues 229-249 (FETLVILGYLILHTIFMAYKY) form a helical membrane-spanning segment. Topologically, residues 250–267 (QYDPYHIIFAAHRAEVAH) are extracellular. Residues 268–288 (FVAYRSGILSFAHLPLIVLFA) traverse the membrane as a helical segment. The Ferric oxidoreductase domain occupies 273-407 (SGILSFAHLP…SGIEWIYAAI (135 aa)). The Cytoplasmic portion of the chain corresponds to 289-304 (GRNNFLQLISGLKHTS). The helical transmembrane segment at 305–325 (FIVFHKWLGRMMFLDAIIHAA) threads the bilayer. Residues His-309 and His-323 each contribute to the heme site. Residues 326 to 346 (GFTNYYLYYKKWNTVRLRVYW) lie on the Extracellular side of the membrane. The chain crosses the membrane as a helical span at residues 347 to 367 (KFGIATTCLAGMLIFFSIAAF). At 368 to 373 (RRHYYE) the chain is on the cytoplasmic side. A helical membrane pass occupies residues 374–394 (TFMALHIVFAALFLYTCWEHV). Heme contacts are provided by His-379 and His-393. Thr-395 is a topological domain (extracellular). The chain crosses the membrane as a helical span at residues 396 to 416 (NFSGIEWIYAAIAIWGVDRIV). The FAD-binding FR-type domain occupies 408-527 (AIWGVDRIVR…EGPYGSKSTA (120 aa)). Residues 417–719 (RITRIALLGF…IEYLEEYQAW (303 aa)) are Cytoplasmic-facing. 472-478 (HPFTVMD) lines the FAD pocket. 519-522 (GPYG) provides a ligand contact to NADP(+). Composition is skewed to polar residues over residues 606–618 (EKIS…NGET) and 625–643 (SSLS…TELP). The segment at 606–643 (EKISSNEVKNGETTAEKAPSSLSNSEKAPSESENTELP) is disordered. 685-686 (CG) contacts NADP(+).

The protein belongs to the ferric reductase (FRE) family. The cofactor is FAD.

The protein resides in the cell membrane. The enzyme catalyses 2 a Fe(II)-siderophore + NADP(+) + H(+) = 2 a Fe(III)-siderophore + NADPH. In terms of biological role, siderophore-iron reductase responsible for reducing extracellular iron prior to import. Catalyzes the reductive uptake of Fe(3+) bound to dihydroxamate rhodotorulic acid. Fe(3+) is reduced to Fe(2+), which then dissociates from the siderophore and can be imported by the high-affinity Fe(2+) transport complex in the plasma membrane. The polypeptide is Ferric reductase transmembrane component 4 (FRE4) (Saccharomyces cerevisiae (strain ATCC 204508 / S288c) (Baker's yeast)).